The chain runs to 530 residues: Chaperone Ric-8A (530 aa).

Position 435 is a phosphoserine (S435). A phosphothreonine mark is found at T440 and T442. Phosphoserine occurs at positions 501, 522, 523, and 527.

It belongs to the synembryn family. As to quaternary structure, interacts with GDP-bound G alpha proteins GNAI1, GNAO1 and GNAQ, and with GNA13 with lower affinity. Does not interact with G-alpha proteins when they are in complex with subunits beta and gamma. Interacts (via C-terminus) with RGS14; the interaction stimulates the dissociation of the complex between RGS14 and the active GTP-bound form of GNAI1. Interacts with NCS1; interaction is favored in the absence of Ca(2+) and myristoylation of NCS1 is not required. Post-translationally, phosphorylated at Ser-435 and Thr-440 by CK2, stabilizing its interface with G alpha proteins.

Its subcellular location is the cytoplasm. The protein resides in the cell cortex. Chaperone that specifically binds and folds nascent G alpha proteins prior to G protein heterotrimer formation, promoting their stability and activity: folds GNAI1, GNAO1, GNA13 and GNAQ. Does not fold G(s) G-alpha proteins GNAS nor GNAL. Also acts as a guanine nucleotide exchange factor (GEF) for G alpha proteins by stimulating exchange of bound GDP for free GTP. Involved in regulation of microtubule pulling forces during mitotic movement of chromosomes by stimulating G(i)-alpha protein (GNAI1), possibly leading to release G(i)-alpha-GTP and NuMA proteins from the NuMA-GPSM2-G(i)-alpha-GDP complex. Also acts as an activator for G(q)-alpha (GNAQ) protein by enhancing the G(q)-coupled receptor-mediated ERK activation. The chain is Chaperone Ric-8A (RIC8A) from Macaca fascicularis (Crab-eating macaque).